The primary structure comprises 320 residues: L-lactate dehydrogenase (320 aa).

Residues Val-18, Asp-39, Arg-44, Tyr-69, and 83–84 contribute to the NAD(+) site; that span reads GA. Residues Gln-86 and Arg-92 each contribute to the substrate site. Residues Ser-105, 122–124, and Ser-147 each bind NAD(+); that span reads AAN. 124–127 contacts substrate; the sequence is NPVD. 152 to 155 provides a ligand contact to substrate; the sequence is DSSR. His-179 serves as the catalytic Proton acceptor. Tyr-223 is subject to Phosphotyrosine. Residue Thr-232 participates in substrate binding.

The protein belongs to the LDH/MDH superfamily. LDH family. Homotetramer.

The protein localises to the cytoplasm. It carries out the reaction (S)-lactate + NAD(+) = pyruvate + NADH + H(+). Its pathway is fermentation; pyruvate fermentation to lactate; (S)-lactate from pyruvate: step 1/1. With respect to regulation, the quaternary structure is constitutionally similar to the active conformation of allosteric LDHs, and the regulation is independent of the fructose 1,6-bisphosphate-binding site. Its function is as follows. Catalyzes the conversion of lactate to pyruvate. In Lactiplantibacillus pentosus (Lactobacillus pentosus), this protein is L-lactate dehydrogenase.